We begin with the raw amino-acid sequence, 343 residues long: Phosphate acyltransferase (343 aa).

It belongs to the PlsX family. Homodimer. Probably interacts with PlsY.

It localises to the cytoplasm. The enzyme catalyses a fatty acyl-[ACP] + phosphate = an acyl phosphate + holo-[ACP]. It participates in lipid metabolism; phospholipid metabolism. In terms of biological role, catalyzes the reversible formation of acyl-phosphate (acyl-PO(4)) from acyl-[acyl-carrier-protein] (acyl-ACP). This enzyme utilizes acyl-ACP as fatty acyl donor, but not acyl-CoA. In Halorhodospira halophila (strain DSM 244 / SL1) (Ectothiorhodospira halophila (strain DSM 244 / SL1)), this protein is Phosphate acyltransferase.